Here is a 67-residue protein sequence, read N- to C-terminus: Putative sodium channel alpha-toxin Acra5 (67 aa).

The LCN-type CS-alpha/beta domain maps to R2–R65. 4 disulfides stabilise this stretch: C13/C64, C17/C40, C26/C45, and C30/C47. Position 67 (R67) is a propeptide, removed by a carboxypeptidase.

The protein belongs to the long (4 C-C) scorpion toxin superfamily. Sodium channel inhibitor family. Alpha subfamily. Expressed by the venom gland.

Its subcellular location is the secreted. Alpha toxins bind voltage-independently at site-3 of sodium channels (Nav) and inhibit the inactivation of the activated channels, thereby blocking neuronal transmission. This Androctonus crassicauda (Arabian fat-tailed scorpion) protein is Putative sodium channel alpha-toxin Acra5.